The sequence spans 142 residues: Glia maturation factor gamma (142 aa).

Ser2 carries the post-translational modification N-acetylserine. Residues 4 to 139 (SLVVCEVDPE…TETWLKEKLA (136 aa)) enclose the ADF-H domain.

Belongs to the actin-binding proteins ADF family. GMF subfamily.

The sequence is that of Glia maturation factor gamma (Gmfg) from Mus musculus (Mouse).